A 512-amino-acid chain; its full sequence is MEFQIILVVIISALVGLVIGFFIRKNIAEGKITSAEAQAKRILEEAEKNAEGKKREAIVMAKEEVLKLRNEMEREIRDRRNELQRLERRLLQKEETLDRKMDSMEKKEESLSRKEADIENTKAELTNVLNRQLAELERVSGLSSEEARQILLNDVEKELQHDMAVMIKDFENRAKEEADKKARDIISSAIQRCAADHVAEATVAVIPLPNDEMKGRIIGREGRNIRAFETLTGIDLIIDDTPEAVILSGFDPIRREVARLALERLISDGRIHPARIEEMVEKAQKDVEVQIREAGEQATFETGVHGLHPELVKLLGRLKFRTSYGQNVLKHSIEVCHLAGLMAAELGIDVKLAKRAGLLHDIGKAVDHEVEGPHVAIGVNLCQKYKESPEVIHAIAAHHGDEEPRTIEAVLVQAADAISAARPGARRETLESYIKRLQKLEEIAGTFEGVEKSFAIQAGREIRIMVKPDKIDDLAAIRLVRDIAKKIENELDYPGQIKVIIIRETRYVEYAK.

Residues 3-23 (FQIILVVIISALVGLVIGFFI) traverse the membrane as a helical segment. One can recognise a KH domain in the interval 202-265 (TVAVIPLPND…EVARLALERL (64 aa)). The HD domain occupies 328–421 (VLKHSIEVCH…VQAADAISAA (94 aa)).

It belongs to the RNase Y family.

It is found in the cell membrane. Functionally, endoribonuclease that initiates mRNA decay. This is Ribonuclease Y from Desulforamulus reducens (strain ATCC BAA-1160 / DSM 100696 / MI-1) (Desulfotomaculum reducens).